The primary structure comprises 596 residues: Trehalase (596 aa).

Positions 1–23 (MFKLPTISLLLVSWSCLVALSQA) are cleaved as a signal peptide. Residues R193, 200–201 (WD), N237, and 246–248 (RSQ) contribute to the substrate site. N-linked (GlcNAc...) asparagine glycosylation is found at N288 and N293. Positions 303-323 (SSGPRPESYREDVETGEEFPT) are disordered. Residues 307–309 (RPE) and G341 contribute to the substrate site. D343 acts as the Proton donor/acceptor in catalysis. N-linked (GlcNAc...) asparagine glycans are attached at residues N359, N451, and N516. E541 functions as the Proton donor/acceptor in the catalytic mechanism. E556 provides a ligand contact to substrate.

Belongs to the glycosyl hydrolase 37 family. In the adult brain predominantly expressed in glial cells (at protein level).

It carries out the reaction alpha,alpha-trehalose + H2O = alpha-D-glucose + beta-D-glucose. In terms of biological role, enzyme that cleaves trehalose to produce 2 glucose molecules that can be used by the glycolytic pathway. Glycolysis is essential in glial cells but not in neurons; neurons rely on the citric acid cycle for their energy needs, and on lactate and alanine secreted into the hemolymph by glial cells to fuel it. This is Trehalase from Drosophila melanogaster (Fruit fly).